The following is a 205-amino-acid chain: High frequency lysogenization protein HflD homolog (205 aa).

This sequence belongs to the HflD family.

Its subcellular location is the cytoplasm. The protein resides in the cell inner membrane. The polypeptide is High frequency lysogenization protein HflD homolog (Shewanella sp. (strain W3-18-1)).